A 134-amino-acid polypeptide reads, in one-letter code: Complexin-1 (134 aa).

2 disordered regions span residues 1–60 and 74–114; these read MEFV…AERE and KKEE…EEDE. Positions 15 to 60 are enriched in basic and acidic residues; it reads DMGKMLGGDEEKDPDAAKKEEERQEALRQAEEERKAKYAKMEAERE. The stretch at 29 to 64 forms a coiled coil; the sequence is DAAKKEEERQEALRQAEEERKAKYAKMEAEREVMRQ. Residues 48 to 70 are interaction with the SNARE complex; it reads RKAKYAKMEAEREVMRQGIRDKY.

The protein belongs to the complexin/synaphin family. Binds to the SNARE core complex containing SNAP25, VAMP2 and STX1A. As to expression, nervous system, and pancreatic islet cells. Present in many brain regions, including hippocampus and cerebellum. In the retina, present at conventional amacrine cell synapses (at protein level).

Its subcellular location is the cytoplasm. It is found in the cytosol. The protein localises to the perikaryon. It localises to the presynapse. Its function is as follows. Positively regulates a late step in exocytosis of various cytoplasmic vesicles, such as synaptic vesicles and other secretory vesicles. Organizes the SNAREs into a cross-linked zigzag topology that, when interposed between the vesicle and plasma membranes, is incompatible with fusion, thereby preventing SNAREs from releasing neurotransmitters until an action potential arrives at the synapse. Also involved in glucose-induced secretion of insulin by pancreatic beta-cells. Essential for motor behavior. The protein is Complexin-1 (Cplx1) of Mus musculus (Mouse).